Reading from the N-terminus, the 751-residue chain is Nucleoporin NUP37 (751 aa).

A WD 1 repeat occupies 21-65 (SLGRRIYDVKTYPVQSPQGATILIYGHENGATVVWRGGRRLKPPK). Positions 57-77 (GGRRLKPPKPQTNEKRNGTKP) are disordered. The segment covering 68–77 (TNEKRNGTKP) has biased composition (basic and acidic residues). WD repeat units lie at residues 162-209 (TNDV…LTGP), 237-271 (AQAA…KPGT), 282-322 (YLPS…LPSD), and 351-390 (TSRK…PTAA). The segment at 419–443 (EGTSPLRNPTTQKASSSSSGEFVPM) is disordered. Residues 423–438 (PLRNPTTQKASSSSSG) show a composition bias toward polar residues. WD repeat units follow at residues 455–492 (AFGG…VLFL) and 494–534 (GADP…RMIR). The interval 671-692 (IPSTDAGDEETIPATSAPSSQQ) is disordered. The span at 683 to 692 (PATSAPSSQQ) shows a compositional bias: polar residues. Residues 716–750 (RDVEQELLDIMEIDRELEQLEQARERGRKRVFFEE) are a coiled coil.

The nuclear pore complex (NPC) constitutes the exclusive means of nucleocytoplasmic transport. NPCs allow the passive diffusion of ions and small molecules and the active, nuclear transport receptor-mediated bidirectional transport of macromolecules such as proteins, RNAs, ribonucleoparticles (RNPs), and ribosomal subunits across the nuclear envelope. The 55-60 MDa NPC is composed of at least 28 different subunits: AMO1, ELYS, GLE1, GLE2, MLP1, NDC1, NIC96, NSP1, NUP133, NUP145, NUP152, NUP159, NUP170, NUP188, NUP192, NUP37, NUP49, NUP53, NUP56, NUP57, NUP82, NUP84, NUP85, POM152, POM33, POM34, SEC13 and SEH1. Due to its 8-fold rotational symmetry, all subunits are present with 8 copies or multiples thereof.

The protein resides in the nucleus. It is found in the nuclear pore complex. This Chaetomium thermophilum (strain DSM 1495 / CBS 144.50 / IMI 039719) (Thermochaetoides thermophila) protein is Nucleoporin NUP37 (NUP37).